Consider the following 332-residue polypeptide: UPF0194 membrane protein YbhG (332 aa).

The first 16 residues, 1–16, serve as a signal peptide directing secretion; it reads MMKKPVVIGLAVVVLA. Residues 108–209 are a coiled coil; sequence EEIAQAAAAV…LNLQDSTLIA (102 aa).

The protein belongs to the UPF0194 family.

It is found in the periplasm. This is UPF0194 membrane protein YbhG from Escherichia coli O45:K1 (strain S88 / ExPEC).